Here is a 338-residue protein sequence, read N- to C-terminus: Putative acyl-[acyl-carrier-protein] desaturase DesA1 (338 aa).

Fe cation contacts are provided by glutamate 76, glutamate 107, histidine 110, glutamate 167, glutamate 197, and histidine 200. The span at glutamate 314–lysine 328 shows a compositional bias: basic and acidic residues. Positions glutamate 314–arginine 338 are disordered.

Belongs to the fatty acid desaturase type 2 family. Homodimer. It depends on Fe(2+) as a cofactor.

The protein localises to the cell surface. It participates in lipid metabolism; fatty acid metabolism. May be a desaturase involved in mycobacterial fatty acid biosynthesis. The protein is Putative acyl-[acyl-carrier-protein] desaturase DesA1 (desA1) of Mycobacterium tuberculosis (strain CDC 1551 / Oshkosh).